We begin with the raw amino-acid sequence, 189 residues long: Interferon alpha-5 (189 aa).

An N-terminal signal peptide occupies residues 1–21; sequence MALPFVLLMALVVLNCKSICS. 2 disulfides stabilise this stretch: Cys24–Cys122 and Cys52–Cys162.

Belongs to the alpha/beta interferon family.

It is found in the secreted. In terms of biological role, produced by macrophages, IFN-alpha have antiviral activities. Interferon stimulates the production of two enzymes: a protein kinase and an oligoadenylate synthetase. This Homo sapiens (Human) protein is Interferon alpha-5 (IFNA5).